A 358-amino-acid polypeptide reads, in one-letter code: Dynein axonemal assembly factor 10 (358 aa).

WD repeat units lie at residues 64–106 (EKSK…SPVY), 116–155 (NAID…TPVV), 163–206 (ETKR…LRWE), 208–250 (NIRN…PSKG), 258–298 (AHKS…QRSK), and 320–358 (LSTQ…LNTV).

As to quaternary structure, interacts with PIH1D1; the interaction associates DNAAF10 with the R2TP complex. Interacts with several dynein axonemal assembly factors.

It is found in the dynein axonemal particle. Its function is as follows. Key assembly factor specifically required for the stability of axonemal dynein heavy chains in cytoplasm. The protein is Dynein axonemal assembly factor 10 (dnaaf10) of Danio rerio (Zebrafish).